A 319-amino-acid polypeptide reads, in one-letter code: Protein HEXIM1 (319 aa).

The span at 1-22 (MELIKEETAPEDDSRGRQRDCR) shows a compositional bias: basic and acidic residues. 4 disordered regions span residues 1–111 (MELI…KKRR), 157–223 (LMEE…LQKD), 262–286 (NNWL…RVRE), and 299–319 (NELL…SQPS). Residues 24–35 (SVVSSKQVQRNQ) are compositionally biased toward polar residues. The span at 49-61 (PMCRDRSDPEPRT) shows a compositional bias: basic and acidic residues. Basic residues predominate over residues 97-111 (GKKKHRRRPSKKKRR). Residues 185–202 (TASEDENFEAEEDDEEEG) are compositionally biased toward acidic residues. Over residues 203–216 (GGGSDGMGRPGQAG) the composition is skewed to gly residues. Positions 240–306 (SKQELVREYL…ENNELLLKTP (67 aa)) form a coiled coil. The segment covering 306 to 319 (PASNEPGLNQSQPS) has biased composition (polar residues).

The protein belongs to the HEXIM family. As to quaternary structure, homooligomer and heterooligomer. Core component of the 7SK RNP complex.

It localises to the nucleus. Its subcellular location is the cytoplasm. Transcriptional regulator which functions as a general RNA polymerase II transcription inhibitor. Core component of the 7SK RNP complex: in cooperation with 7SK snRNA sequesters P-TEFb in a large inactive 7SK snRNP complex preventing RNA polymerase II phosphorylation and subsequent transcriptional elongation. Plays a role in the regulation of DNA virus-mediated innate immune response by assembling into the HDP-RNP complex, a complex that serves as a platform for IRF3 phosphorylation and subsequent innate immune response activation through the cGAS-STING pathway. The sequence is that of Protein HEXIM1 (hexim1) from Danio rerio (Zebrafish).